Consider the following 705-residue polypeptide: Forkhead box protein P1 (705 aa).

Positions 1–19 are enriched in polar residues; that stretch reads MMQESGSETKSNGSAIQNG. The segment at 1–41 is disordered; sequence MMQESGSETKSNGSAIQNGSSGGNHLLECGALRDTRSNGEA. The residue at position 113 (Ser-113) is a Phosphoserine. 2 disordered regions span residues 267–286 and 291–326; these read HTAE…TSTC and APSK…EHPH. 2 stretches are compositionally biased toward polar residues: residues 276 to 286 and 291 to 311; these read NHSSLDLTSTC and APSK…QLSV. Residues 314–326 are compositionally biased toward basic and acidic residues; it reads PKRESLSHEEHPH. Lys-315 is covalently cross-linked (Glycyl lysine isopeptide (Lys-Gly) (interchain with G-Cter in SUMO2)). The C2H2-type zinc-finger motif lies at 334 to 359; it reads GVCKWPGCEAVCDDFPAFLKHLNSEH. Residues 376-397 are leucine-zipper; sequence VQQLELQLAKDKERLQAMMTHL. Residues Lys-400 and Lys-405 each participate in a glycyl lysine isopeptide (Lys-Gly) (interchain with G-Cter in SUMO2) cross-link. Positions 410–414 are CTBP1-binding; the sequence is PLNLV. Polar residues predominate over residues 418–431; sequence TLSKSASEASPQSL. Residues 418–450 form a disordered region; that stretch reads TLSKSASEASPQSLPHTPTTPTAPLTPVTQGPS. Positions 432–446 are enriched in low complexity; sequence PHTPTTPTAPLTPVT. Lys-470 participates in a covalent cross-link: Glycyl lysine isopeptide (Lys-Gly) (interchain with G-Cter in SUMO2). Residues 493–583 constitute a DNA-binding region (fork-head); it reads RPPFTYASLI…PQKISGNPSL (91 aa). A disordered region spans residues 639-705; sequence EHTNSNESDS…EDEPVNEDME (67 aa). Residues 640 to 651 are compositionally biased toward polar residues; the sequence is HTNSNESDSSPG. Residue Thr-681 is modified to Phosphothreonine. Position 686 is a phosphoserine (Ser-686). Residues 695-705 are compositionally biased toward acidic residues; it reads YEDEPVNEDME.

As to quaternary structure, forms homodimers and heterodimers with FOXP2 and FOXP4. Dimerization is required for DNA-binding. Self-associates. Interacts with CTBP1. Interacts with NCOR2 and AR. Interacts with FOXP2. Interacts with TBR1. Interacts with AURKA; this interaction facilitates the phosphorylation of FOXP1, which suppresses the expression of FBXL7. Interacts with ZMYM2. In terms of tissue distribution, isoform 5 is specifically expressed in embryonic stem cells. Highest expression in the lung, brain, and spleen. Lower expression in heart, skeletal muscle, kidney, small intestine (isoform 3 not present) and liver.

It is found in the nucleus. In terms of biological role, transcriptional repressor. Can act with CTBP1 to synergistically repress transcription but CTPBP1 is not essential. Plays an important role in the specification and differentiation of lung epithelium. Acts cooperatively with FOXP4 to regulate lung secretory epithelial cell fate and regeneration by restricting the goblet cell lineage program; the function may involve regulation of AGR2. Essential transcriptional regulator of B-cell development. Involved in regulation of cardiac muscle cell proliferation. Involved in the columnar organization of spinal motor neurons. Promotes the formation of the lateral motor neuron column (LMC) and the preganglionic motor column (PGC) and is required for respective appropriate motor axon projections. The segment-appropriate generation of spinal cord motor columns requires cooperation with other Hox proteins. Can regulate PITX3 promoter activity; may promote midbrain identity in embryonic stem cell-derived dopamine neurons by regulating PITX3. Negatively regulates the differentiation of T follicular helper cells T(FH)s. Involved in maintenance of hair follicle stem cell quiescence; the function probably involves regulation of FGF18. Represses transcription of various pro-apoptotic genes and cooperates with NF-kappa B-signaling in promoting B-cell expansion by inhibition of caspase-dependent apoptosis. Binds to CSF1R promoter elements and is involved in regulation of monocyte differentiation and macrophage functions; repression of CSF1R in monocytes seems to involve NCOR2 as corepressor. Involved in endothelial cell proliferation, tube formation and migration indicative for a role in angiogenesis; the role in neovascularization seems to implicate suppression of SEMA5B. Can negatively regulate androgen receptor signaling. Acts as a transcriptional activator of the FBXL7 promoter; this activity is regulated by AURKA. Its function is as follows. Involved in transcriptional regulation in embryonic stem cells (ESCs). Stimulates expression of transcription factors that are required for pluripotency and decreases expression of differentiation-associated genes. Has distinct DNA-binding specifities as compared to the canonical form and preferentially binds DNA with the sequence 5'-CGATACAA-3' (or closely related sequences). Promotes ESC self-renewal and pluripotency. This chain is Forkhead box protein P1 (Foxp1), found in Mus musculus (Mouse).